We begin with the raw amino-acid sequence, 215 residues long: Adenylate kinase (215 aa).

Residue 10-15 (GAGKGT) participates in ATP binding. Residues 30–59 (STGDIFRKNISENTPLGMEARSYMDKGLLV) are NMP. AMP is bound by residues T31, R36, 57–59 (LLV), 85–88 (GFPR), and Q92. The tract at residues 126–163 (GRRVCTSCGGSFHIKFNPPTIDGKCNLCGSDIVQRKDD) is LID. R127 contacts ATP. Zn(2+) contacts are provided by C130 and C133. 136–137 (SF) provides a ligand contact to ATP. Residues C150 and C153 each coordinate Zn(2+). 2 residues coordinate AMP: R160 and R171. ATP is bound at residue K199.

This sequence belongs to the adenylate kinase family. In terms of assembly, monomer.

It localises to the cytoplasm. It carries out the reaction AMP + ATP = 2 ADP. It participates in purine metabolism; AMP biosynthesis via salvage pathway; AMP from ADP: step 1/1. In terms of biological role, catalyzes the reversible transfer of the terminal phosphate group between ATP and AMP. Plays an important role in cellular energy homeostasis and in adenine nucleotide metabolism. The sequence is that of Adenylate kinase from Clostridium botulinum (strain Alaska E43 / Type E3).